Consider the following 966-residue polypeptide: Serine/threonine-protein kinase 10 (966 aa).

A phosphoserine mark is found at serine 13 and serine 20. The Protein kinase domain maps to 36–294 (WEIVGELGDG…AAQLLQHPFV (259 aa)). Residues 42–50 (LGDGAFGKV) and lysine 65 contribute to the ATP site. The active-site Proton acceptor is the aspartate 157. The segment at 175-224 (DFGVSAKNLKTLQKRDSFIGTPYWMAPEVVLCETMKDAPYDYKADIWSLG) is activation segment. A Phosphothreonine; by autocatalysis modification is found at threonine 185. A Phosphoserine modification is found at serine 191. Polar residues-rich tracts occupy residues 341-363 (TQDSANVTQPSLDSNKLLQDSST) and 371-392 (QEPVSGSCSQPSGDGPLQTTSP). The tract at residues 341–497 (TQDSANVTQP…NLSTSESMDY (157 aa)) is disordered. Over residues 421–430 (IQMDEEKQIP) the composition is skewed to basic and acidic residues. Phosphoserine is present on residues serine 437, serine 449, serine 453, and serine 484. Over residues 438-456 (PAASKSQKANQSRPNSSAL) the composition is skewed to polar residues. A compositionally biased stretch (polar residues) spans 485–497 (DCSNLSTSESMDY). Phosphoserine is present on residues serine 513 and serine 548. Residues 588 to 936 (LQLEQMHKRF…LNQKKREQEM (349 aa)) adopt a coiled-coil conformation. Disordered regions lie at residues 660 to 692 (KKEVKSEVEKLPRQQRKESMKQKMEEHSQKKQR), 826 to 865 (INGAGSASEQREKIKQFSQQEEKRQKAERLQQQQKHENQM), and 901 to 966 (LDES…GDAS). Basic and acidic residues-rich tracts occupy residues 834–865 (EQREKIKQFSQQEEKRQKAERLQQQQKHENQM) and 901–946 (LDES…EAEP). The residue at position 950 (threonine 950) is a Phosphothreonine. The segment covering 950–966 (TPSKASNFFPYSSGDAS) has biased composition (polar residues).

Belongs to the protein kinase superfamily. STE Ser/Thr protein kinase family. STE20 subfamily. In terms of assembly, homodimer; homodimerization is required for activation segment autophosphorylation. In terms of processing, autophosphorylates following homodimerization, leading to activation of the protein. As to expression, expressed predominantly in lymphoid organs such as spleen, thymus, and bone marrow.

The protein resides in the cell membrane. The catalysed reaction is L-seryl-[protein] + ATP = O-phospho-L-seryl-[protein] + ADP + H(+). The enzyme catalyses L-threonyl-[protein] + ATP = O-phospho-L-threonyl-[protein] + ADP + H(+). Inhibited by the pyrrole-indolinone inhibitor SU11274 (K00593): intercalates between the ATP-binding Lys-65 and alpha-C glutamate (Glu-81), resulting in a partial disordering of the lysine side chain. Also specifically inhibited by erlotinib. Slightly inhibited by gefitinib. Serine/threonine-protein kinase involved in regulation of lymphocyte migration. Phosphorylates MSN, and possibly PLK1. Involved in regulation of lymphocyte migration by mediating phosphorylation of ERM proteins such as MSN. Acts as a negative regulator of MAP3K1/MEKK1. May also act as a cell cycle regulator by acting as a polo kinase kinase: mediates phosphorylation of PLK1 in vitro; however such data require additional evidences in vivo. The polypeptide is Serine/threonine-protein kinase 10 (Stk10) (Mus musculus (Mouse)).